The sequence spans 626 residues: Acetolactate synthase large subunit (626 aa).

Positions Met-1 to Thr-13 are enriched in polar residues. Residues Met-1–Pro-23 are disordered. Thiamine diphosphate is bound at residue Glu-73. FAD contacts are provided by residues Arg-175, His-281–Arg-302, and Asp-324–Asp-343. The tract at residues Gln-416–Asn-496 is thiamine pyrophosphate binding. 2 residues coordinate Mg(2+): Asp-467 and Asn-494.

The protein belongs to the TPP enzyme family. As to quaternary structure, dimer of large and small chains. The cofactor is Mg(2+). Thiamine diphosphate is required as a cofactor.

It catalyses the reaction 2 pyruvate + H(+) = (2S)-2-acetolactate + CO2. Its pathway is amino-acid biosynthesis; L-isoleucine biosynthesis; L-isoleucine from 2-oxobutanoate: step 1/4. The protein operates within amino-acid biosynthesis; L-valine biosynthesis; L-valine from pyruvate: step 1/4. The polypeptide is Acetolactate synthase large subunit (ilvB) (Corynebacterium glutamicum (strain ATCC 13032 / DSM 20300 / JCM 1318 / BCRC 11384 / CCUG 27702 / LMG 3730 / NBRC 12168 / NCIMB 10025 / NRRL B-2784 / 534)).